The following is a 154-amino-acid chain: Protein X (154 aa).

The segment at 68–117 is mitochondrial targeting sequence; that stretch reads PCALRFTSARRMETTVNAHQVLPKVLHKRTLGLSAMSTTDLEAYFKDCLF.

Belongs to the orthohepadnavirus protein X family. As to quaternary structure, may form homodimer. May interact with host CEBPA, CFLAR, CREB1, DDB1, E4F1, HBXIP, HSPD1/HSP60, NFKBIA, POLR2E and SMAD4. Interacts with host SMC5-SMC6 complex and induces its degradation. Interacts with host TRPC4AP; leading to prevent ubiquitination of TRPC4AP. Interacts with host PLSCR1; this interaction promotes ubiquitination and degradation of HBx and impairs HBx-mediated cell proliferation. A fraction may be phosphorylated in insect cells and HepG2 cells, a human hepatoblastoma cell line. Phosphorylated in vitro by host protein kinase C or mitogen-activated protein kinase. N-acetylated in insect cells.

The protein localises to the host cytoplasm. The protein resides in the host nucleus. It is found in the host mitochondrion. Its function is as follows. Multifunctional protein that plays a role in silencing host antiviral defenses and promoting viral transcription. Does not seem to be essential for HBV infection. May be directly involved in development of cirrhosis and liver cancer (hepatocellular carcinoma). Most of cytosolic activities involve modulation of cytosolic calcium. The effect on apoptosis is controversial depending on the cell types in which the studies have been conducted. May induce apoptosis by localizing in mitochondria and causing loss of mitochondrial membrane potential. May also modulate apoptosis by binding host CFLAR, a key regulator of the death-inducing signaling complex (DISC). Promotes viral transcription by using the host E3 ubiquitin ligase DDB1 to target the SMC5-SMC6 complex to proteasomal degradation. This host complex would otherwise bind to viral episomal DNA, and prevents its transcription. Moderately stimulates transcription of many different viral and cellular transcription elements. Promoters and enhancers stimulated by HBx contain DNA binding sites for NF-kappa-B, AP-1, AP-2, c-EBP, ATF/CREB, or the calcium-activated factor NF-AT. This is Protein X from Hepatitis B virus genotype C subtype adr (strain Japan/adr4/1983) (HBV-C).